Here is a 137-residue protein sequence, read N- to C-terminus: Small ribosomal subunit protein uS12 (137 aa).

The tract at residues 1–57 (MPTINQLVRKPRKSKVEKSKSPALNVGYNSHKKVQTNVSSPQKRGVATRVGTMTPKK) is disordered. Asp102 is modified (3-methylthioaspartic acid).

Belongs to the universal ribosomal protein uS12 family. In terms of assembly, part of the 30S ribosomal subunit. Contacts proteins S8 and S17. May interact with IF1 in the 30S initiation complex.

In terms of biological role, with S4 and S5 plays an important role in translational accuracy. Interacts with and stabilizes bases of the 16S rRNA that are involved in tRNA selection in the A site and with the mRNA backbone. Located at the interface of the 30S and 50S subunits, it traverses the body of the 30S subunit contacting proteins on the other side and probably holding the rRNA structure together. The combined cluster of proteins S8, S12 and S17 appears to hold together the shoulder and platform of the 30S subunit. This Streptococcus sanguinis (strain SK36) protein is Small ribosomal subunit protein uS12.